Reading from the N-terminus, the 78-residue chain is D-alanyl carrier protein (78 aa).

The Carrier domain maps to 1 to 78 (MEFREQVLNL…KIVEALEELR (78 aa)). Ser36 carries the O-(pantetheine 4'-phosphoryl)serine modification.

It belongs to the DltC family. In terms of processing, 4'-phosphopantetheine is transferred from CoA to a specific serine of apo-DCP.

Its subcellular location is the cytoplasm. It functions in the pathway cell wall biogenesis; lipoteichoic acid biosynthesis. Carrier protein involved in the D-alanylation of lipoteichoic acid (LTA). The loading of thioester-linked D-alanine onto DltC is catalyzed by D-alanine--D-alanyl carrier protein ligase DltA. The DltC-carried D-alanyl group is further transferred to cell membrane phosphatidylglycerol (PG) by forming an ester bond, probably catalyzed by DltD. D-alanylation of LTA plays an important role in modulating the properties of the cell wall in Gram-positive bacteria, influencing the net charge of the cell wall. The sequence is that of D-alanyl carrier protein from Staphylococcus aureus (strain Mu50 / ATCC 700699).